The sequence spans 520 residues: Phosphoenolpyruvate carboxykinase (ATP) (520 aa).

3 residues coordinate substrate: arginine 61, phenylalanine 196, and lysine 202. Residues lysine 202, histidine 222, and 238-246 contribute to the ATP site; that span reads GLSGTGKTT. Mn(2+)-binding residues include lysine 202 and histidine 222. Aspartate 259 provides a ligand contact to Mn(2+). Residues glutamate 287, arginine 324, 443–444, and threonine 449 each bind ATP; that span reads RI. Residue arginine 324 participates in substrate binding.

It belongs to the phosphoenolpyruvate carboxykinase (ATP) family. Requires Mn(2+) as cofactor.

Its subcellular location is the cytoplasm. It carries out the reaction oxaloacetate + ATP = phosphoenolpyruvate + ADP + CO2. It participates in carbohydrate biosynthesis; gluconeogenesis. Its function is as follows. Involved in the gluconeogenesis. Catalyzes the conversion of oxaloacetate (OAA) to phosphoenolpyruvate (PEP) through direct phosphoryl transfer between the nucleoside triphosphate and OAA. The protein is Phosphoenolpyruvate carboxykinase (ATP) of Amoebophilus asiaticus (strain 5a2).